Consider the following 214-residue polypeptide: A-type ATP synthase subunit D (214 aa).

The protein belongs to the V-ATPase D subunit family. Has multiple subunits with at least A(3), B(3), C, D, E, F, H, I and proteolipid K(x).

It localises to the cell membrane. Functionally, component of the A-type ATP synthase that produces ATP from ADP in the presence of a proton gradient across the membrane. The sequence is that of A-type ATP synthase subunit D from Desulfurococcus sp. (strain SY).